The primary structure comprises 297 residues: Ribosomal RNA small subunit methyltransferase H (297 aa).

S-adenosyl-L-methionine is bound by residues 34 to 36 (AGH), Asp-54, Phe-88, Asp-106, and Gln-113. Residues 272–297 (PLTAGEEETDRNPRARSAKLRAAEKK) are disordered.

Belongs to the methyltransferase superfamily. RsmH family.

It localises to the cytoplasm. The catalysed reaction is cytidine(1402) in 16S rRNA + S-adenosyl-L-methionine = N(4)-methylcytidine(1402) in 16S rRNA + S-adenosyl-L-homocysteine + H(+). Functionally, specifically methylates the N4 position of cytidine in position 1402 (C1402) of 16S rRNA. This Acidobacterium capsulatum (strain ATCC 51196 / DSM 11244 / BCRC 80197 / JCM 7670 / NBRC 15755 / NCIMB 13165 / 161) protein is Ribosomal RNA small subunit methyltransferase H.